The following is a 484-amino-acid chain: Hexokinase-2 (484 aa).

The 447-residue stretch at 21-467 folds into the Hexokinase domain; the sequence is PQLLEALKPI…SGVGAAVIAA (447 aa). Residues 75–208 are hexokinase small subdomain; sequence TGKETGSYLA…GVPIDVVALI (134 aa). A hexokinase large subdomain region spans residues 209–456; it reads NDTTGTLVAS…DPIIIVPAED (248 aa).

The protein belongs to the hexokinase family. Monomer.

It localises to the cytoplasm. It catalyses the reaction a D-hexose + ATP = a D-hexose 6-phosphate + ADP + H(+). It carries out the reaction D-fructose + ATP = D-fructose 6-phosphate + ADP + H(+). The catalysed reaction is D-glucose + ATP = D-glucose 6-phosphate + ADP + H(+). It functions in the pathway carbohydrate metabolism; hexose metabolism. The protein operates within carbohydrate degradation; glycolysis; D-glyceraldehyde 3-phosphate and glycerone phosphate from D-glucose: step 1/4. Functionally, catalyzes the phosphorylation of hexose, such as D-glucose and D-fructose, to hexose 6-phosphate (D-glucose 6-phosphate and D-fructose 6-phosphate, respectively). Mediates the initial step of glycolysis by catalyzing phosphorylation of D-glucose to D-glucose 6-phosphate. This chain is Hexokinase-2 (HXK2), found in Candida albicans (strain SC5314 / ATCC MYA-2876) (Yeast).